A 396-amino-acid chain; its full sequence is Methionine import ATP-binding protein MetN 2 (396 aa).

One can recognise an ABC transporter domain in the interval 41 to 280 (VSFELVGKVF…PRHGATRALL (240 aa)). 77–84 (GRSGAGKS) contacts ATP.

The protein belongs to the ABC transporter superfamily. Methionine importer (TC 3.A.1.24) family. In terms of assembly, the complex is composed of two ATP-binding proteins (MetN), two transmembrane proteins (MetI) and a solute-binding protein (MetQ).

The protein localises to the cell inner membrane. It carries out the reaction L-methionine(out) + ATP + H2O = L-methionine(in) + ADP + phosphate + H(+). It catalyses the reaction D-methionine(out) + ATP + H2O = D-methionine(in) + ADP + phosphate + H(+). Functionally, part of the ABC transporter complex MetNIQ involved in methionine import. Responsible for energy coupling to the transport system. In Burkholderia pseudomallei (strain 1710b), this protein is Methionine import ATP-binding protein MetN 2.